Reading from the N-terminus, the 388-residue chain is Galactokinase (388 aa).

33 to 36 (EHTD) contacts substrate. Residues Ser-67 and 124–130 (GSGLSSS) each bind ATP. Residues Ser-130 and Glu-162 each contribute to the Mg(2+) site. Asp-174 functions as the Proton acceptor in the catalytic mechanism. Tyr-224 serves as a coordination point for substrate.

The protein belongs to the GHMP kinase family. GalK subfamily.

It is found in the cytoplasm. It carries out the reaction alpha-D-galactose + ATP = alpha-D-galactose 1-phosphate + ADP + H(+). The protein operates within carbohydrate metabolism; galactose metabolism. Its function is as follows. Catalyzes the transfer of the gamma-phosphate of ATP to D-galactose to form alpha-D-galactose-1-phosphate (Gal-1-P). The polypeptide is Galactokinase (Streptococcus thermophilus).